The chain runs to 296 residues: Nucleotide-binding protein SMU_1306c (296 aa).

13-20 provides a ligand contact to ATP; that stretch reads GMSGAGKT. 63–66 provides a ligand contact to GTP; sequence DMRS.

It belongs to the RapZ-like family.

Displays ATPase and GTPase activities. In Streptococcus mutans serotype c (strain ATCC 700610 / UA159), this protein is Nucleotide-binding protein SMU_1306c.